We begin with the raw amino-acid sequence, 95 residues long: MSISSRVKSKRIQLGLNQAELAQKVGTTQQSIEQLENGKTKRPRFLPELASALGVSVDWLLNGTSDSNVRFVGHVEPKGKYPLISMVRAGSWCEA.

One can recognise an HTH cro/C1-type domain in the interval 7–60 (VKSKRIQLGLNQAELAQKVGTTQQSIEQLENGKTKRPRFLPELASALGVSVDWL). Residues 18 to 37 (QAELAQKVGTTQQSIEQLEN) constitute a DNA-binding region (H-T-H motif).

Homodimer, when bound to an operator.

Binds to two sets of three contiguous operator sites in the phage genome. The chain is Repressor protein CI (CI) from Escherichia coli (Bacteriophage 434).